Consider the following 266-residue polypeptide: Probable septum site-determining protein MinC (266 aa).

The disordered stretch occupies residues 98–146 (ILKGGRPVSDVDVPKVEPESPPAEEKKKTGKATKASGKSDEIGETDSPQ). Residues 109–124 (DVPKVEPESPPAEEKK) are compositionally biased toward basic and acidic residues.

Belongs to the MinC family. As to quaternary structure, interacts with MinD and FtsZ.

Its function is as follows. Cell division inhibitor that blocks the formation of polar Z ring septums. Rapidly oscillates between the poles of the cell to destabilize FtsZ filaments that have formed before they mature into polar Z rings. Prevents FtsZ polymerization. This Allorhizobium ampelinum (strain ATCC BAA-846 / DSM 112012 / S4) (Agrobacterium vitis (strain S4)) protein is Probable septum site-determining protein MinC.